The chain runs to 321 residues: Olfactory receptor 3A2 (321 aa).

Residues 1–35 (MSLQKLMEPEAGTNRTAVAEFILLGLVQTEEMQPV) are Extracellular-facing. The N-linked (GlcNAc...) asparagine glycan is linked to Asn-14. The helical transmembrane segment at 36–58 (VFVLLLFAYLVTTGGNLSILAAV) threads the bilayer. Residues 59–66 (LVEPKLHA) lie on the Cytoplasmic side of the membrane. The chain crosses the membrane as a helical span at residues 67 to 88 (PMYFFLGNLSVLDVGCITVTVP). Over 89-109 (AMLGRLLSHKSTISYDACLSQ) the chain is Extracellular. A disulfide bridge connects residues Cys-106 and Cys-198. Residues 110–129 (LFFFHLLAGMDCFLLTAMAY) form a helical membrane-spanning segment. At 130 to 149 (DRLLAICQPLTYSTRMSQTV) the chain is on the cytoplasmic side. Residues 150–167 (QRMLVAASLACAFTNALT) traverse the membrane as a helical segment. At 168–205 (HTVAMSTLNFCGPNEVNHFYCDLPQLFQLSCSSTQLNE) the chain is on the extracellular side. Residues 206 to 229 (LLLFAVGFIMAGTPLVLIITAYSH) form a helical membrane-spanning segment. At 230 to 246 (VAAAVLRIRSVEGRKKA) the chain is on the cytoplasmic side. A helical membrane pass occupies residues 247 to 270 (FSTCGSHLTVVCLFFGRGIFNYMR). Residues 271-281 (LGSEEASDKDK) are Extracellular-facing. The chain crosses the membrane as a helical span at residues 282 to 301 (GVGVFNTVINPMLNPLIYSL). The Cytoplasmic segment spans residues 302–321 (RNPDVQGALWQIFLGRRSLT).

It belongs to the G-protein coupled receptor 1 family.

Its subcellular location is the cell membrane. Functionally, odorant receptor. The chain is Olfactory receptor 3A2 (OR3A2) from Homo sapiens (Human).